Consider the following 325-residue polypeptide: Beta-ketoacyl-[acyl-carrier-protein] synthase III (325 aa).

Residues cysteine 119 and histidine 252 contribute to the active site. An ACP-binding region spans residues 253-257 (QANIR). Asparagine 282 is a catalytic residue.

This sequence belongs to the thiolase-like superfamily. FabH family. Homodimer.

It is found in the cytoplasm. The catalysed reaction is malonyl-[ACP] + acetyl-CoA + H(+) = 3-oxobutanoyl-[ACP] + CO2 + CoA. It functions in the pathway lipid metabolism; fatty acid biosynthesis. Functionally, catalyzes the condensation reaction of fatty acid synthesis by the addition to an acyl acceptor of two carbons from malonyl-ACP. Catalyzes the first condensation reaction which initiates fatty acid synthesis and may therefore play a role in governing the total rate of fatty acid production. Possesses both acetoacetyl-ACP synthase and acetyl transacylase activities. Its substrate specificity determines the biosynthesis of branched-chain and/or straight-chain of fatty acids. The protein is Beta-ketoacyl-[acyl-carrier-protein] synthase III of Delftia acidovorans (strain DSM 14801 / SPH-1).